The following is a 66-amino-acid chain: Small ribosomal subunit protein bS21 (66 aa).

Belongs to the bacterial ribosomal protein bS21 family.

The polypeptide is Small ribosomal subunit protein bS21 (Rickettsia peacockii (strain Rustic)).